The sequence spans 66 residues: Alpha-conotoxin GIB (66 aa).

The N-terminal stretch at 1 to 21 is a signal peptide; it reads MGMRMMFTVFLLVVLATTVVS. Positions 22 to 49 are excised as a propeptide; the sequence is FPSERASDGRDDTAKDEGSDMEKLVEKK. Disulfide bonds link Cys-51–Cys-56 and Cys-52–Cys-62. Gly-64 is modified (glycine amide).

Belongs to the conotoxin A superfamily. In terms of tissue distribution, expressed by the venom duct.

The protein resides in the secreted. Functionally, alpha-conotoxins act on postsynaptic membranes, they bind to the nicotinic acetylcholine receptors (nAChR) and thus inhibit them. Both the globular (with C1-C3; C2-C4 disulfide pattern) and ribbon (C1-C4; C2-C3) isomers reversibly inhibit human muscle-type alpha-1-beta-1-delta-epsilon/CHRNA1-CHRNB1-CHRND-CHRNE nAChRs (IC(50)=116 nM and IC(50)=643 nM, respectively). Both isomers also inhibit alpha-7/CHRNA7 and alpha-9-alpha-10/CHRNA9-CHRNA10 (IC(50)=1113 nM by globular isomer) nAChRs. The polypeptide is Alpha-conotoxin GIB (Conus geographus (Geography cone)).